Reading from the N-terminus, the 762-residue chain is Probable inorganic carbon transporter subunit DabA (762 aa).

Residues Cys279, Asp281, His461, and Cys476 each coordinate Zn(2+).

Belongs to the inorganic carbon transporter (TC 9.A.2) DabA family. As to quaternary structure, forms a complex with DabB. It depends on Zn(2+) as a cofactor.

The protein localises to the cell inner membrane. Its function is as follows. Part of an energy-coupled inorganic carbon pump. The chain is Probable inorganic carbon transporter subunit DabA from Legionella pneumophila (strain Corby).